The chain runs to 189 residues: UPF0301 protein PFLU_5755 (189 aa).

The protein belongs to the UPF0301 (AlgH) family.

The chain is UPF0301 protein PFLU_5755 from Pseudomonas fluorescens (strain SBW25).